The sequence spans 258 residues: uncharacterized protein (258 aa).

The N-terminal stretch at 1-19 (MRKIFLPLLLVALSPVAHS) is a signal peptide.

This is an uncharacterized protein from Escherichia coli (strain K12).